We begin with the raw amino-acid sequence, 539 residues long: GMP synthase [glutamine-hydrolyzing] (539 aa).

In terms of domain architecture, Glutamine amidotransferase type-1 spans 4–202 (KILILDFGSQ…VLQIAGAKPD (199 aa)). Cysteine 81 (nucleophile) is an active-site residue. Active-site residues include histidine 176 and glutamate 178. A GMPS ATP-PPase domain is found at 203-395 (WIMKNHIEEA…LGLPPEMVYR (193 aa)). 230–236 (SGGVDSS) is an ATP binding site.

As to quaternary structure, homodimer.

It carries out the reaction XMP + L-glutamine + ATP + H2O = GMP + L-glutamate + AMP + diphosphate + 2 H(+). It participates in purine metabolism; GMP biosynthesis; GMP from XMP (L-Gln route): step 1/1. In terms of biological role, catalyzes the synthesis of GMP from XMP. In Burkholderia orbicola (strain AU 1054), this protein is GMP synthase [glutamine-hydrolyzing].